The following is a 205-amino-acid chain: Outer-membrane lipoprotein LolB (205 aa).

An N-terminal signal peptide occupies residues Met1–Gly17. A lipid anchor (N-palmitoyl cysteine) is attached at Cys18. A lipid anchor (S-diacylglycerol cysteine) is attached at Cys18.

It belongs to the LolB family. Monomer.

It localises to the cell outer membrane. Plays a critical role in the incorporation of lipoproteins in the outer membrane after they are released by the LolA protein. The polypeptide is Outer-membrane lipoprotein LolB (Pseudomonas putida (strain GB-1)).